A 410-amino-acid chain; its full sequence is Peptidase T (410 aa).

H79 contributes to the Zn(2+) binding site. D81 is a catalytic residue. D142 lines the Zn(2+) pocket. E176 functions as the Proton acceptor in the catalytic mechanism. Zn(2+) is bound by residues E177, D199, and H381.

It belongs to the peptidase M20B family. It depends on Zn(2+) as a cofactor.

The protein resides in the cytoplasm. It carries out the reaction Release of the N-terminal residue from a tripeptide.. Functionally, cleaves the N-terminal amino acid of tripeptides. The polypeptide is Peptidase T (Bacillus thuringiensis (strain Al Hakam)).